The following is a 246-amino-acid chain: Small ribosomal subunit protein uS2 (246 aa).

The protein belongs to the universal ribosomal protein uS2 family.

This Exiguobacterium sp. (strain ATCC BAA-1283 / AT1b) protein is Small ribosomal subunit protein uS2.